A 1160-amino-acid chain; its full sequence is Protein translocase subunit SecA (1160 aa).

Residues glutamine 162 and 180 to 184 (GEGKT) contribute to the ATP site. The tract at residues 342–362 (LLEEKEEAEEEGDSRRAQELE) is disordered. Over residues 344–353 (EEKEEAEEEG) the composition is skewed to acidic residues. An ATP-binding site is contributed by aspartate 726. The disordered stretch occupies residues 1060-1134 (EVQTEGQGPR…RNEYVTVRNN (75 aa)). The segment covering 1074-1083 (QRNAQTQHDS) has biased composition (polar residues). Residues 1104–1115 (AAERDPTVEEKQ) are compositionally biased toward basic and acidic residues.

It belongs to the SecA family. In terms of assembly, monomer and homodimer. Part of the essential Sec protein translocation apparatus which comprises SecA, SecYEG and auxiliary proteins SecDF. Other proteins may also be involved.

It is found in the cell inner membrane. It localises to the cytoplasm. It catalyses the reaction ATP + H2O + cellular proteinSide 1 = ADP + phosphate + cellular proteinSide 2.. In terms of biological role, part of the Sec protein translocase complex. Interacts with the SecYEG preprotein conducting channel. Has a central role in coupling the hydrolysis of ATP to the transfer of proteins into and across the cell membrane, serving as an ATP-driven molecular motor driving the stepwise translocation of polypeptide chains across the membrane. The polypeptide is Protein translocase subunit SecA (Salinibacter ruber (strain DSM 13855 / M31)).